A 526-amino-acid polypeptide reads, in one-letter code: Cytochrome P450 monooxygenase 58 (526 aa).

A run of 3 helical transmembrane segments spans residues isoleucine 13–isoleucine 33, phenylalanine 115–lysine 135, and isoleucine 306–leucine 326. Cysteine 451 contributes to the heme binding site.

Belongs to the cytochrome P450 family. Requires heme as cofactor.

Its subcellular location is the membrane. The protein operates within secondary metabolite biosynthesis. In terms of biological role, cytochrome P450 monooxygenase that is able to use delta(6)-protoilludene as a substrate to produce delta(6)-protoilludene-8-ol. The chain is Cytochrome P450 monooxygenase 58 from Postia placenta (strain ATCC 44394 / Madison 698-R) (Brown rot fungus).